Reading from the N-terminus, the 233-residue chain is Probable O-methyltransferase Rv1703c (233 aa).

S-adenosyl-L-methionine contacts are provided by residues Val-55, Glu-77, 79-80, and Glu-102; that span reads GT. Asp-157 lines the a divalent metal cation pocket. Asp-159 is a binding site for S-adenosyl-L-methionine. A divalent metal cation is bound by residues Asp-185 and Asn-186.

This sequence belongs to the class I-like SAM-binding methyltransferase superfamily. Cation-dependent O-methyltransferase family.

Specifically methylates an O atom of its substrate. In Mycobacterium tuberculosis (strain ATCC 25618 / H37Rv), this protein is Probable O-methyltransferase Rv1703c.